We begin with the raw amino-acid sequence, 572 residues long: Proline--tRNA ligase (572 aa).

It belongs to the class-II aminoacyl-tRNA synthetase family. ProS type 1 subfamily. As to quaternary structure, homodimer.

The protein localises to the cytoplasm. It catalyses the reaction tRNA(Pro) + L-proline + ATP = L-prolyl-tRNA(Pro) + AMP + diphosphate. Its function is as follows. Catalyzes the attachment of proline to tRNA(Pro) in a two-step reaction: proline is first activated by ATP to form Pro-AMP and then transferred to the acceptor end of tRNA(Pro). As ProRS can inadvertently accommodate and process non-cognate amino acids such as alanine and cysteine, to avoid such errors it has two additional distinct editing activities against alanine. One activity is designated as 'pretransfer' editing and involves the tRNA(Pro)-independent hydrolysis of activated Ala-AMP. The other activity is designated 'posttransfer' editing and involves deacylation of mischarged Ala-tRNA(Pro). The misacylated Cys-tRNA(Pro) is not edited by ProRS. This is Proline--tRNA ligase from Yersinia pseudotuberculosis serotype O:1b (strain IP 31758).